Consider the following 77-residue polypeptide: uncharacterized protein (77 aa).

This is an uncharacterized protein from Plasmodium falciparum (isolate fcm17 / Senegal).